The sequence spans 209 residues: Vacuolar protein sorting-associated protein 28 homolog (209 aa).

One can recognise a VPS28 N-terminal domain in the interval 1–105 (MSQNSNLMRE…REGRPITVKD (105 aa)). Residues 109–205 (NVLKHIASIV…AYQSFQKALN (97 aa)) form the VPS28 C-terminal domain.

The protein belongs to the VPS28 family. In terms of assembly, component of the ESCRT-I complex (endosomal sorting complex required for transport I).

It localises to the endosome. Component of the ESCRT-I complex, a regulator of vesicular trafficking process. This Caenorhabditis briggsae protein is Vacuolar protein sorting-associated protein 28 homolog.